We begin with the raw amino-acid sequence, 582 residues long: Leucine-rich repeat protein SHOC-2 (582 aa).

Basic and acidic residues-rich tracts occupy residues 1–29 (MSSS…KEAK) and 36–57 (KESK…KKDS). A disordered region spans residues 1–88 (MSSSLGKEKD…PGTRKKSSNA (88 aa)). The short motif at 63–66 (GVAF) is the RVxF motif; important for interaction with PP1c element. LRR repeat units lie at residues 101 to 122 (NSMR…IKEL), 124 to 145 (QLTE…VGCL), 147 to 169 (NLMT…DNLK), 170 to 191 (KLRM…VYRL), 193 to 214 (SLTT…IKNL), 216 to 237 (KLSM…IGEL), 239 to 260 (NLIT…IGNC), 262 to 283 (QITN…IGNL), 285 to 307 (SLSR…AKCS), 308 to 329 (ALEE…LLSS), 332 to 353 (KLNS…GPSQ), 356 to 377 (TIYS…IFSR), 380 to 400 (VLSK…DFGT), 403 to 424 (SMVE…VSGL), 426 to 448 (SLEV…GNLR), 449 to 470 (KLRE…IAYL), 472 to 494 (DLQK…GHLT), 495 to 516 (NLTH…IGTL), 518 to 540 (NLEE…LALC), and 542 to 563 (KLSI…IVAG).

Belongs to the SHOC2 family. As to quaternary structure, component of the SHOC2-MRAS-PP1c (SMP) complex consisting of SHOC2, GTP-bound M-Ras/MRAS and the catalytic subunit of protein phosphatase 1 (either PPP1CA, PPP1CB or PPP1CC). SHOC2 and PP1c preferably bind M-Ras/MRAS, but they also bind K-Ras/KRAS, N-Ras/NRAS and H-Ras/HRAS; these interactions are GTP-dependent and both SHOC2 and PP1c are required to form a stable complex. Interacts with PP1c in the absence of Ras GTPases. Interacts with M-Ras/MRAS and RAF1. Interacts with ERBIN; disrupts the interaction with RAF1 and Ras, preventing the activation of the Ras signaling pathway. Interacts with LZTR1.

It is found in the cytoplasm. Its subcellular location is the nucleus. Functionally, core component of the SHOC2-MRAS-PP1c (SMP) holophosphatase complex that regulates activation of the MAPK pathway. Acts as a scaffolding protein in the SMP complex. The SMP complex specifically dephosphorylates the inhibitory phosphorylation at 'Ser-259' of RAF1 kinase, 'Ser-365' of BRAF kinase and 'Ser-214' of ARAF kinase, stimulating their kinase activities. The SMP complex enhances the dephosphorylation activity and substrate specificity of PP1c. In Homo sapiens (Human), this protein is Leucine-rich repeat protein SHOC-2 (SHOC2).